The following is a 607-amino-acid chain: Transporter aclS (607 aa).

The next 12 membrane-spanning stretches (helical) occupy residues 67 to 87, 91 to 111, 152 to 172, 192 to 212, 221 to 241, 262 to 282, 317 to 337, 364 to 384, 423 to 443, 445 to 465, 500 to 520, and 531 to 551; these read LGGS…AVVL, IAAI…IGFP, LTVV…TAIL, VTTQ…PVLY, LMIG…IWSL, SLGF…SIAL, VFGQ…FGCL, AAAV…NVVD, GCYV…LASA, TFVS…GIHI, GVLP…HSIN, and HLYA…HTLV. The disordered stretch occupies residues 583 to 607; it reads NKDSTEEDSDRSLRRESREVVETKV. The span at 592–607 shows a compositional bias: basic and acidic residues; that stretch reads DRSLRRESREVVETKV.

This sequence belongs to the purine-cytosine permease (2.A.39) family.

Its subcellular location is the membrane. Its function is as follows. Transporter; part of the gene cluster that mediates the biosynthesis of aspirochlorine (or antibiotic A30641), an unusual halogenated spiro compound with distinctive antifungal properties due to selective inhibition of protein biosynthesis, and which is also active against bacteria, viruses, and murine tumor cells. The protein is Transporter aclS of Aspergillus oryzae (strain ATCC 42149 / RIB 40) (Yellow koji mold).